The chain runs to 444 residues: Glutamyl-tRNA reductase (444 aa).

Residues 49–52, Ser109, 114–116, and Gln120 each bind substrate; these read TCNR and ETQ. The Nucleophile role is filled by Cys50. 189–194 contributes to the NADP(+) binding site; the sequence is GAGKMG.

It belongs to the glutamyl-tRNA reductase family. As to quaternary structure, homodimer.

The enzyme catalyses (S)-4-amino-5-oxopentanoate + tRNA(Glu) + NADP(+) = L-glutamyl-tRNA(Glu) + NADPH + H(+). It functions in the pathway porphyrin-containing compound metabolism; protoporphyrin-IX biosynthesis; 5-aminolevulinate from L-glutamyl-tRNA(Glu): step 1/2. Functionally, catalyzes the NADPH-dependent reduction of glutamyl-tRNA(Glu) to glutamate 1-semialdehyde (GSA). The chain is Glutamyl-tRNA reductase from Bacillus anthracis (strain A0248).